The primary structure comprises 193 residues: Putative manganese efflux pump MntP (193 aa).

6 helical membrane-spanning segments follow: residues 6-26 (VIFIALGLSADCFAVSIGIAC), 48-68 (AGMVVIGFFAGLSVIDIISAF), 71-91 (WIAFGLLLFIGVRMIYEALQG), 108-128 (LLGVAVATSIDALAVGLAFAV), 132-152 (NIGLAALLIGLVSLTVSFLGF), and 165-185 (WVGVAGGLVLVFIGLKILAEH).

It belongs to the MntP (TC 9.B.29) family.

It is found in the cell membrane. Functionally, probably functions as a manganese efflux pump. In Dehalococcoides mccartyi (strain ATCC BAA-2100 / JCM 16839 / KCTC 5957 / BAV1), this protein is Putative manganese efflux pump MntP.